We begin with the raw amino-acid sequence, 436 residues long: 3-ketoacyl-CoA thiolase (436 aa).

C99 functions as the Acyl-thioester intermediate in the catalytic mechanism. Active-site proton acceptor residues include H392 and C422.

It belongs to the thiolase-like superfamily. Thiolase family. As to quaternary structure, heterotetramer of two alpha chains (FadJ) and two beta chains (FadI).

The protein localises to the cytoplasm. It catalyses the reaction an acyl-CoA + acetyl-CoA = a 3-oxoacyl-CoA + CoA. It participates in lipid metabolism; fatty acid beta-oxidation. Its function is as follows. Catalyzes the final step of fatty acid oxidation in which acetyl-CoA is released and the CoA ester of a fatty acid two carbons shorter is formed. The polypeptide is 3-ketoacyl-CoA thiolase (Shigella dysenteriae serotype 1 (strain Sd197)).